Here is a 266-residue protein sequence, read N- to C-terminus: uncharacterized protein (266 aa).

Belongs to the chlamydial CPn_0087/CT3_09/TC_0583 family.

This is an uncharacterized protein from Chlamydia muridarum (strain MoPn / Nigg).